Here is a 520-residue protein sequence, read N- to C-terminus: GMP synthase [glutamine-hydrolyzing] (520 aa).

The Glutamine amidotransferase type-1 domain occupies 12-205 (KIIVLDYGSQ…AISICGARGD (194 aa)). Cysteine 89 serves as the catalytic Nucleophile. Catalysis depends on residues histidine 179 and glutamate 181. A GMPS ATP-PPase domain is found at 206-395 (WSMDNFIDME…LGMPEEIVWR (190 aa)). 233–239 (SGGVDSS) contributes to the ATP binding site.

In terms of assembly, homodimer.

The enzyme catalyses XMP + L-glutamine + ATP + H2O = GMP + L-glutamate + AMP + diphosphate + 2 H(+). The protein operates within purine metabolism; GMP biosynthesis; GMP from XMP (L-Gln route): step 1/1. Functionally, catalyzes the synthesis of GMP from XMP. This is GMP synthase [glutamine-hydrolyzing] from Streptococcus pyogenes serotype M5 (strain Manfredo).